Reading from the N-terminus, the 362-residue chain is N5-carboxyaminoimidazole ribonucleotide synthase (362 aa).

ATP is bound by residues Arg-108, Lys-148, 153–159 (GYDGKGQ), 185–188 (EGFV), Glu-193, His-216, and 270–271 (NE). The ATP-grasp domain occupies 112–300 (KQFLNESGIE…QFEQHIRAVA (189 aa)).

Belongs to the PurK/PurT family. In terms of assembly, homodimer.

The enzyme catalyses 5-amino-1-(5-phospho-beta-D-ribosyl)imidazole + hydrogencarbonate + ATP = 5-carboxyamino-1-(5-phospho-D-ribosyl)imidazole + ADP + phosphate + 2 H(+). It functions in the pathway purine metabolism; IMP biosynthesis via de novo pathway; 5-amino-1-(5-phospho-D-ribosyl)imidazole-4-carboxylate from 5-amino-1-(5-phospho-D-ribosyl)imidazole (N5-CAIR route): step 1/2. Its function is as follows. Catalyzes the ATP-dependent conversion of 5-aminoimidazole ribonucleotide (AIR) and HCO(3)(-) to N5-carboxyaminoimidazole ribonucleotide (N5-CAIR). This chain is N5-carboxyaminoimidazole ribonucleotide synthase, found in Brucella melitensis biotype 1 (strain ATCC 23456 / CCUG 17765 / NCTC 10094 / 16M).